Consider the following 192-residue polypeptide: Actin, muscle (192 aa).

This sequence belongs to the actin family.

The protein localises to the cytoplasm. Its subcellular location is the cytoskeleton. It carries out the reaction ATP + H2O = ADP + phosphate + H(+). Its function is as follows. Actins are highly conserved proteins that are involved in various types of cell motility and are ubiquitously expressed in all eukaryotic cells. This is Actin, muscle from Chionoecetes opilio (Atlantic snow crab).